A 540-amino-acid chain; its full sequence is Cytochrome P450 monooxygenase ORF5 (540 aa).

Residues 48 to 68 (YHALGTAIALFACACAYALVA) form a helical membrane-spanning segment. N376 and N460 each carry an N-linked (GlcNAc...) asparagine glycan. C483 serves as a coordination point for heme.

The protein belongs to the cytochrome P450 family. The cofactor is heme.

The protein resides in the membrane. The protein operates within sesquiterpene biosynthesis. Its function is as follows. Cytochrome P450 monooxygenase; part of the gene cluster that mediates the biosynthesis of PR-toxin, a bicyclic sesquiterpene belonging to the eremophilane class and acting as a mycotoxin. The first step of the pathway is catalyzed by the aristolochene synthase which performs the cyclization of trans,trans-farnesyl diphosphate (FPP) to the bicyclic sesquiterpene aristolochene. Following the formation of aristolochene, the non-oxygenated aristolochene is converted to the trioxygenated intermediate eremofortin B, via 7-epi-neopetasone. This conversion appears to involve three enzymes, a hydroxysterol oxidase-like enzyme, the quinone-oxidase prx3 that forms the quinone-type-structure in the bicyclic nucleus of aristolochene with the C8-oxo group and the C-3 hydroxyl group, and the P450 monooxygenase ORF6 that introduces the epoxide at the double bond between carbons 1 and 2. No monoxy or dioxy-intermediates have been reported to be released to the broth, so these three early oxidative reactions may be coupled together. Eremofortin B is further oxidized by another P450 monooxygenase, that introduces a second epoxide between carbons 7 and 11 prior to acetylation to eremofortin A by the acetyltransferase ORF8. The second epoxidation may be performed by a second P450 monooxygenase. After the acetylation step, eremofortin A is converted to eremofortin C and then to PR-toxin. First the conversion of eremofortin A to eremofortin C proceeds by oxidation of the side chain of the molecule at C-12 and is catalyzed by the short-chain oxidoreductase prx1. The cytochrome P450 monooxygenase ORF6 is probably also involved in this step. The primary alcohol formed at C-12 is finally oxidized by the short-chain alcohol dehydrogenase prx4 that forms PR-toxin. This Penicillium roqueforti (strain FM164) protein is Cytochrome P450 monooxygenase ORF5.